Consider the following 450-residue polypeptide: 5-amino-6-(D-ribitylamino)uracil--L-tyrosine 4-hydroxyphenyl transferase (450 aa).

Residues 1–24 (MPDVPETVGTPDGSTEFEHRPTTD) are disordered. Residues 82-350 (VTFVANLNNN…MIAVSRLFLD (269 aa)) enclose the Radical SAM core domain. [4Fe-4S] cluster-binding residues include Cys96, Cys100, and Cys103. The interval 430-450 (PDADVLGPQLGPRADGTPLLD) is disordered.

Belongs to the radical SAM superfamily. CofH family. In terms of assembly, consists of two subunits, CofG and CofH. Requires [4Fe-4S] cluster as cofactor.

It catalyses the reaction 5-amino-6-(D-ribitylamino)uracil + L-tyrosine + S-adenosyl-L-methionine = 5-amino-5-(4-hydroxybenzyl)-6-(D-ribitylimino)-5,6-dihydrouracil + 2-iminoacetate + 5'-deoxyadenosine + L-methionine + H(+). It functions in the pathway cofactor biosynthesis; coenzyme F0 biosynthesis. Its function is as follows. Catalyzes the radical-mediated synthesis of 5-amino-5-(4-hydroxybenzyl)-6-(D-ribitylimino)-5,6-dihydrouracil from 5-amino-6-(D-ribitylamino)uracil and L-tyrosine. The chain is 5-amino-6-(D-ribitylamino)uracil--L-tyrosine 4-hydroxyphenyl transferase from Haloarcula marismortui (strain ATCC 43049 / DSM 3752 / JCM 8966 / VKM B-1809) (Halobacterium marismortui).